A 384-amino-acid polypeptide reads, in one-letter code: Involucrin (384 aa).

The segment at 1 to 384 (MSQQHTLPVT…LPEQPQEPEV (384 aa)) is disordered. 2 stretches are compositionally biased toward basic and acidic residues: residues 56–65 (PSKHEEKGTD) and 80–134 (PELH…ELHL). Positions 137–146 (QQQQESQEQE) are enriched in low complexity. Positions 179-208 (KQREPQESQEQRLHLGKEQESQEQRLHLGE) are enriched in basic and acidic residues. The span at 239–267 (PEQRLQLLPQGPQEQELHLGKQQQQQESQ) shows a compositional bias: low complexity. Basic and acidic residues-rich tracts occupy residues 268-308 (QHQE…KKLL) and 315-336 (EAVKRHEQLQRDEQFGMKKEQL).

Belongs to the involucrin family. Directly or indirectly cross-linked to cornifelin (CNFN). In terms of processing, substrate of transglutaminase. Specific glutamines or lysines are cross-linked to keratins, desmoplakin and to inter involucrin molecules. As to expression, keratinocytes of epidermis and other stratified squamous epithelia.

It localises to the cytoplasm. In terms of biological role, part of the insoluble cornified cell envelope (CE) of stratified squamous epithelia. This is Involucrin (IVL) from Otolemur crassicaudatus (Brown greater galago).